The sequence spans 250 residues: MAEGGASKGGGEEPGKLPEPAEEESQVLRGTGHCKWFNVRMGFGFISMINREGSPLDIPVDVFVHQSKLFMEGFRSLKEGEPVEFTFKKSSKGLESIRVTGPGGSPCLGSERRPKGKTLQKRKPKGDRCYNCGGLDHHAKECSLPPQPKKCHYCQSIMHMVANCPHKNVAQPPASSQGRQEAESQPCTSTLPREVGGGHGCTSPPFPQEARAEISERSGRSPQEASSTKSSIAPEEQSKKGPSVQKRKKT.

A disordered region spans residues 1–26; it reads MAEGGASKGGGEEPGKLPEPAEEESQ. The 74-residue stretch at 29–102 folds into the CSD domain; that stretch reads RGTGHCKWFN…GLESIRVTGP (74 aa). Phosphoserine is present on residues S54, S96, S105, and S110. Positions 98 to 126 are disordered; the sequence is RVTGPGGSPCLGSERRPKGKTLQKRKPKG. Residues 112–125 carry the Bipartite nuclear localization signal motif; the sequence is RRPKGKTLQKRKPK. A compositionally biased stretch (basic residues) spans 114-125; that stretch reads PKGKTLQKRKPK. CCHC-type zinc fingers lie at residues 127–144 and 149–166; these read DRCYNCGGLDHHAKECSL and KKCHYCQSIMHMVANCPH. Zn(2+) contacts are provided by C129, C132, H137, C142, C151, C154, H159, and C164. A disordered region spans residues 169 to 250; that stretch reads VAQPPASSQG…GPSVQKRKKT (82 aa). Over residues 173–191 the composition is skewed to polar residues; sequence PASSQGRQEAESQPCTSTL. S203 is subject to Phosphoserine. Residues 210–219 show a composition bias toward basic and acidic residues; sequence ARAEISERSG. Over residues 220 to 231 the composition is skewed to polar residues; it reads RSPQEASSTKSS. The Nucleolar localization signal motif lies at 239–250; it reads KKGPSVQKRKKT.

Belongs to the lin-28 family. Expressed at high levels in the placenta and, at mucher lower, in testis and fetal liver. Isoform 1 is only detected in placenta and in moderately and poorly differentiated hepatocellular carcinoma cells (at protein level). Isoform 2 is detected in fetal liver, non-tumor liver tissues, as well as well-differentiated tumor tissues (at protein level). Tends to be up-regulated in triple-negative (ER-,PR-,HER2-) breast tumors, as well as in liver, ovarian, and thyroid carcinomas.

It is found in the nucleus. The protein localises to the nucleolus. Its subcellular location is the cytoplasm. Suppressor of microRNA (miRNA) biogenesis, including that of let-7 and possibly of miR107, miR-143 and miR-200c. Binds primary let-7 transcripts (pri-let-7), including pri-let-7g and pri-let-7a-1, and sequester them in the nucleolus, away from the microprocessor complex, hence preventing their processing into mature miRNA. Does not act on pri-miR21. The repression of let-7 expression is required for normal development and contributes to maintain the pluripotent state of embryonic stem cells by preventing let-7-mediated differentiation. When overexpressed, recruits ZCCHC11/TUT4 uridylyltransferase to pre-let-7 transcripts, leading to their terminal uridylation and degradation. This activity might not be relevant in vivo, as LIN28B-mediated inhibition of let-7 miRNA maturation appears to be ZCCHC11-independent. Interaction with target pre-miRNAs occurs via an 5'-GGAG-3' motif in the pre-miRNA terminal loop. Mediates MYC-induced let-7 repression. When overexpressed, isoform 1 stimulates growth of the breast adenocarcinoma cell line MCF-7. Isoform 2 has no effect on cell growth. The chain is Protein lin-28 homolog B (LIN28B) from Homo sapiens (Human).